The sequence spans 388 residues: GTPase Obg (388 aa).

An Obg domain is found at methionine 1 to leucine 159. In terms of domain architecture, OBG-type G spans alanine 160 to glutamine 333. GTP-binding positions include glycine 166–serine 173, phenylalanine 191–valine 195, aspartate 213–glycine 216, asparagine 283–aspartate 286, and serine 314–tyrosine 316. Mg(2+)-binding residues include serine 173 and threonine 193.

This sequence belongs to the TRAFAC class OBG-HflX-like GTPase superfamily. OBG GTPase family. In terms of assembly, monomer. The cofactor is Mg(2+).

The protein localises to the cytoplasm. Its function is as follows. An essential GTPase which binds GTP, GDP and possibly (p)ppGpp with moderate affinity, with high nucleotide exchange rates and a fairly low GTP hydrolysis rate. Plays a role in control of the cell cycle, stress response, ribosome biogenesis and in those bacteria that undergo differentiation, in morphogenesis control. The polypeptide is GTPase Obg (Shewanella sp. (strain MR-4)).